Here is a 382-residue protein sequence, read N- to C-terminus: GDSL esterase/lipase At4g01130 (382 aa).

The first 28 residues, 1–28, serve as a signal peptide directing secretion; the sequence is MASDINRRRSFSLLVLIIVMLYGHKGDS. The active-site Nucleophile is Ser-41. N-linked (GlcNAc...) asparagine glycosylation is found at Asn-118, Asn-263, Asn-275, and Asn-330. Active-site residues include Asp-348 and His-351.

Belongs to the 'GDSL' lipolytic enzyme family.

The protein localises to the secreted. The protein is GDSL esterase/lipase At4g01130 of Arabidopsis thaliana (Mouse-ear cress).